The chain runs to 519 residues: uncharacterized protein (519 aa).

Belongs to the glycogen phosphorylase family.

This is an uncharacterized protein from Methanocaldococcus jannaschii (strain ATCC 43067 / DSM 2661 / JAL-1 / JCM 10045 / NBRC 100440) (Methanococcus jannaschii).